A 464-amino-acid polypeptide reads, in one-letter code: 3-isopropylmalate dehydratase large subunit (464 aa).

Cysteine 337, cysteine 397, and cysteine 400 together coordinate [4Fe-4S] cluster.

The protein belongs to the aconitase/IPM isomerase family. LeuC type 1 subfamily. Heterodimer of LeuC and LeuD. [4Fe-4S] cluster serves as cofactor.

It carries out the reaction (2R,3S)-3-isopropylmalate = (2S)-2-isopropylmalate. It functions in the pathway amino-acid biosynthesis; L-leucine biosynthesis; L-leucine from 3-methyl-2-oxobutanoate: step 2/4. Its function is as follows. Catalyzes the isomerization between 2-isopropylmalate and 3-isopropylmalate, via the formation of 2-isopropylmaleate. In Bacillus cereus (strain ATCC 10987 / NRS 248), this protein is 3-isopropylmalate dehydratase large subunit.